The primary structure comprises 124 residues: Fluoride-specific ion channel FluC (124 aa).

The next 4 membrane-spanning stretches (helical) occupy residues 1 to 21 (MLNT…RYGV), 36 to 56 (TMII…WFVV), 70 to 90 (TGIL…FLLI), and 100 to 120 (LYVI…FAII). Residues Gly-74 and Thr-77 each coordinate Na(+).

This sequence belongs to the fluoride channel Fluc/FEX (TC 1.A.43) family.

The protein localises to the cell inner membrane. It catalyses the reaction fluoride(in) = fluoride(out). With respect to regulation, na(+) is not transported, but it plays an essential structural role and its presence is essential for fluoride channel function. Functionally, fluoride-specific ion channel. Important for reducing fluoride concentration in the cell, thus reducing its toxicity. The protein is Fluoride-specific ion channel FluC of Methylobacterium sp. (strain 4-46).